We begin with the raw amino-acid sequence, 410 residues long: Putative odorant receptor 65c (410 aa).

Topologically, residues 1–59 are cytoplasmic; that stretch reads MDIRGNVHRFVKFYIDGWKHFRDPTMESSYSAVYYWREQMKAMFLYTTSKERQMPYRSS. The chain crosses the membrane as a helical span at residues 60 to 80; that stretch reads WHTLVIIQATVCFLTMCYGVT. The Extracellular portion of the chain corresponds to 81–92; it reads ESLGDKVQMGRD. Residues 93-113 traverse the membrane as a helical segment; the sequence is IAFIIGFFYIAFKIYYFQWYG. Residues 114-148 are Cytoplasmic-facing; it reads DELDEVVEALETFHPWAQKGPGAVDYRTAKRWYFT. The helical transmembrane segment at 149-169 threads the bilayer; the sequence is LAFFLASSWLVFLCIFILLLI. At 170 to 222 the chain is on the extracellular side; that stretch reads TSPLWVHQQILPLHAAFPFQWHEKSIHPISHAFIYLFQTWNVMYFLTWLVCIE. The chain crosses the membrane as a helical span at residues 223-243; it reads GLSVSIYVEITFAIEVLCLEL. Residues 244–279 are Cytoplasmic-facing; that stretch reads RHLHQRCHGYEQLRLETNRLVQFHQKIVHILDHTNK. The chain crosses the membrane as a helical span at residues 280-300; that stretch reads VFHGTLIMQMGVNFFLVSLSV. Residues 301 to 312 lie on the Extracellular side of the membrane; it reads LEAMEARKDPKV. The helical transmembrane segment at 313–333 threads the bilayer; it reads VAQFAVLMLLALGHLSMWSYF. The Cytoplasmic portion of the chain corresponds to 334–385; the sequence is GDLLSQKSLTISEAAYEAYDPIKGSKDVYRDLCLIIRRGQEPLIMRASPFPS. The helical transmembrane segment at 386-406 threads the bilayer; it reads FNFINYSAILNQCYGILTFLL. At 407-410 the chain is on the extracellular side; it reads KTLD.

The protein belongs to the insect chemoreceptor superfamily. Heteromeric odorant receptor channel (TC 1.A.69) family. Or49a subfamily. Interacts with Orco. Complexes exist early in the endomembrane system in olfactory sensory neurons (OSNs), coupling these complexes to the conserved ciliary trafficking pathway.

The protein resides in the cell membrane. Its function is as follows. Odorant receptor which mediates acceptance or avoidance behavior, depending on its substrates. The odorant receptor repertoire encodes a large collection of odor stimuli that vary widely in identity, intensity, and duration. May form a complex with Orco to form odorant-sensing units, providing sensitive and prolonged odorant signaling and calcium permeability. This chain is Putative odorant receptor 65c (Or65c), found in Drosophila melanogaster (Fruit fly).